Here is a 621-residue protein sequence, read N- to C-terminus: Chaperone protein HtpG (621 aa).

Positions 1 to 325 (MTDASVKETF…SQDLSLNVSR (325 aa)) are a; substrate-binding. Positions 326–541 (EMLQSDPKLA…EGDIDVNLER (216 aa)) are b. The segment at 542–621 (MLKRHGQLQD…RLGSVMDSAL (80 aa)) is c.

This sequence belongs to the heat shock protein 90 family. Homodimer.

It is found in the cytoplasm. Functionally, molecular chaperone. Has ATPase activity. In Roseobacter denitrificans (strain ATCC 33942 / OCh 114) (Erythrobacter sp. (strain OCh 114)), this protein is Chaperone protein HtpG.